The chain runs to 615 residues: Pentatricopeptide repeat-containing protein At2g25580 (615 aa).

A disordered region spans residues phenylalanine 40 to serine 98. A compositionally biased stretch (polar residues) spans arginine 58 to serine 98. PPR repeat units lie at residues aspartate 288–lysine 318, asparagine 319–proline 353, aspartate 354–proline 389, and serine 390–glutamate 420. The tract at residues serine 490–valine 520 is type E(+) motif. The type DYW motif stretch occupies residues glutamate 521 to tryptophan 615.

Belongs to the PPR family. PCMP-H subfamily.

In Arabidopsis thaliana (Mouse-ear cress), this protein is Pentatricopeptide repeat-containing protein At2g25580 (PCMP-H75).